The chain runs to 293 residues: MTDSTRSLRNCLAPAKLNLFLHITGRRPNGYHDLQSVFQLLNWGDTLHFTLRDDGRVARVTDVPGVPEESDLVVRAANLLKAHTGTAHGVDVEIDKILPMGAGLGGGSSDAATTLLALNRLWQLDLPRAELQSLAVKLGADVPFFIFGKNAFAEGIGEELAEVELPTRWFLVVTPRVHVPTAEIFSDELLTRDTKPVTIADFLAQQTSDAEWPDSFGRNDMQEVVTRKYAEVAQVVKWLYDVTPARMTGSGASVFAAFHSKHEAEAAKAKLPASWNGAVAESLNEHPLFAFAS.

Lys16 is an active-site residue. 99-109 (PMGAGLGGGSS) serves as a coordination point for ATP. The active site involves Asp141.

This sequence belongs to the GHMP kinase family. IspE subfamily.

It carries out the reaction 4-CDP-2-C-methyl-D-erythritol + ATP = 4-CDP-2-C-methyl-D-erythritol 2-phosphate + ADP + H(+). Its pathway is isoprenoid biosynthesis; isopentenyl diphosphate biosynthesis via DXP pathway; isopentenyl diphosphate from 1-deoxy-D-xylulose 5-phosphate: step 3/6. In terms of biological role, catalyzes the phosphorylation of the position 2 hydroxy group of 4-diphosphocytidyl-2C-methyl-D-erythritol. This is 4-diphosphocytidyl-2-C-methyl-D-erythritol kinase from Burkholderia orbicola (strain MC0-3).